The chain runs to 1028 residues: RNA cytidine acetyltransferase 1 (1028 aa).

ATP is bound by residues 286-295 (GRGKSAALGL) and Arg460. In terms of domain architecture, N-acetyltransferase spans 548–731 (VLLGPVDESK…FAPFYISQIP (184 aa)). Acetyl-CoA-binding positions include 619 to 621 (IAV), 626 to 632 (MKMGYGS), and Lys719. The interval 989–1028 (ISIESTKTDNKKEKPSGFDKSAKKRGNDKHSSTSNKKRRA) is disordered. Residues 994-1009 (TKTDNKKEKPSGFDKS) show a composition bias toward basic and acidic residues.

Belongs to the RNA cytidine acetyltransferase family. NAT10 subfamily.

The protein resides in the nucleus. The protein localises to the nucleolus. It carries out the reaction a cytidine in 18S rRNA + acetyl-CoA + ATP + H2O = an N(4)-acetylcytidine in 18S rRNA + ADP + phosphate + CoA + H(+). It catalyses the reaction a cytidine in tRNA + acetyl-CoA + ATP + H2O = an N(4)-acetylcytidine in tRNA + ADP + phosphate + CoA + H(+). In terms of biological role, RNA cytidine acetyltransferase with specificity toward both 18S rRNA and tRNAs. Catalyzes the formation of N(4)-acetylcytidine (ac4C) in 18S rRNA. Required for early nucleolar cleavages of precursor rRNA at sites A0, A1 and A2 during 18S rRNA synthesis. Catalyzes the formation of ac4C in serine and leucine tRNAs. Requires a tRNA-binding adapter protein for full tRNA acetyltransferase activity but not for 18S rRNA acetylation. In Arabidopsis thaliana (Mouse-ear cress), this protein is RNA cytidine acetyltransferase 1.